The chain runs to 172 residues: Interferon tau-3 (172 aa).

Intrachain disulfides connect C1–C99 and C29–C139.

The protein belongs to the alpha/beta interferon family. IFN-alphaII subfamily. As to expression, constitutively and exclusively expressed in the mononuclear cells of the extraembryonic trophectoderm.

The protein resides in the secreted. Paracrine hormone primarily responsible for maternal recognition of pregnancy. Interacts with endometrial receptors, probably type I interferon receptors, and blocks estrogen receptor expression, preventing the estrogen-induced increase in oxytocin receptor expression in the endometrium. This results in the suppression of the pulsatile endometrial release of the luteolytic hormone prostaglandin F2-alpha, hindering the regression of the corpus luteum (luteolysis) and therefore a return to ovarian cyclicity. This, and a possible direct effect of IFN-tau on prostaglandin synthesis, leads in turn to continued ovarian progesterone secretion, which stimulates the secretion by the endometrium of the nutrients required for the growth of the conceptus. In summary, displays particularly high antiviral and antiproliferative potency concurrently with particular weak cytotoxicity, high antiluteolytic activity and immunomodulatory properties. In contrast with other IFNs, IFN-tau is not virally inducible. The polypeptide is Interferon tau-3 (IFNT3) (Ovis aries (Sheep)).